The following is a 177-amino-acid chain: Large ribosomal subunit protein uL16m (177 aa).

It belongs to the universal ribosomal protein uL16 family.

The protein resides in the mitochondrion. This chain is Large ribosomal subunit protein uL16m (RPL16), found in Brassica napus (Rape).